The primary structure comprises 377 residues: Probable dehydratase NIT22 (377 aa).

2 residues coordinate NADP(+): Lys101 and Arg196. Positions Glu220–Phe243 are disordered. In terms of domain architecture, MaoC-like spans Pro233–Lys332. Residues Thr265 and Ile287 each contribute to the NADP(+) site.

The protein belongs to the short-chain dehydrogenases/reductases (SDR) family.

It participates in siderophore biosynthesis. Probable dehydratase; part of the gene cluster that mediates the biosynthesis of hydroxamate-containing siderophores that play a critical role in virulence via intracellular iron acquisition during macrophage infection. This chain is Probable dehydratase NIT22, found in Ajellomyces capsulatus (Darling's disease fungus).